The chain runs to 139 residues: Probable disulfide formation protein C (139 aa).

A helical transmembrane segment spans residues 8-27 (EYALLTAWGASFIATLGSLY). Residues Cys-37 and Cys-40 are joined by a disulfide bond. A run of 2 helical transmembrane segments spans residues 42–61 (YQRI…VAKK) and 68–85 (YSLP…YHYA). Cysteines 99 and 104 form a disulfide. A helical membrane pass occupies residues 113 to 135 (GFVTIPFLALIGFITIAVCSFIV).

This sequence belongs to the DsbB family. BdbC subfamily.

Its subcellular location is the cell membrane. In terms of biological role, required for disulfide bond formation in some proteins. This is Probable disulfide formation protein C from Bacillus cereus (strain ATCC 14579 / DSM 31 / CCUG 7414 / JCM 2152 / NBRC 15305 / NCIMB 9373 / NCTC 2599 / NRRL B-3711).